Here is a 546-residue protein sequence, read N- to C-terminus: Alpha-taxilin (546 aa).

Disordered regions lie at residues 1–170 and 482–546; these read MKNQ…GLGK and NKRV…SARA. Positions 11-21 are enriched in polar residues; sequence AKQSNPKSSPG. 2 stretches are compositionally biased toward basic and acidic residues: residues 70 to 80 and 143 to 158; these read DVSEELSRQLE and EEIR…DHRR. The residue at position 72 (serine 72) is a Phosphoserine. Residues 186 to 491 adopt a coiled-coil conformation; that stretch reads EEKLAALCKK…NKRVQDLSAG (306 aa). Residue serine 515 is modified to Phosphoserine. A compositionally biased stretch (polar residues) spans 530 to 546; that stretch reads TEASGQTGPQEPTSARA.

This sequence belongs to the taxilin family. Binds to the C-terminal coiled coil region of syntaxin family members STX1A, STX3A and STX4A, but not when these proteins are complexed with SNAP25, VAMP2 or STXBP1, suggesting that it interacts with syntaxins that do not form the SNARE complex. Ubiquitous, with much higher expression in heart, kidney, liver and pancreas.

Functionally, may be involved in intracellular vesicle traffic and potentially in calcium-dependent exocytosis in neuroendocrine cells. The protein is Alpha-taxilin (TXLNA) of Homo sapiens (Human).